The sequence spans 337 residues: MGNPILAGLGFSLPKRQVSNHDLVGRINTSDEFIVERTGVRTRYHVEPEQAVSALMVPAARQAIEAAGLLPEDIDLLLVNTLSPDHHDPSQACLIQPLLGLRHIPVLDIRAQCSGLLYGLQMARGQILAGLARHVLVVCGEVLSKRMDCSDRGRNLSILLGDGAGAVVVSAGESLEDGLLDLRLGADGNYFDLLMTAAPGSASPTFLDENVLREGGGEFLMRGRPMFEHASQTLVRIAGEMLAAHELTLDDIDHVICHQPNLRILDAVQEQLGIPQHKFAVTVDRLGNMASASTPVTLAMFWPDIQPGQRVLVLTYGSGATWGAALYRKPEEVNRPC.

The anthraniloyl-CoA site is built by Thr-29 and Phe-33. The active-site Acyl-thioester intermediate is Cys-113. Anthraniloyl-CoA is bound by residues 154–155 (RN), 221–224 (MRGR), and His-258.

It belongs to the thiolase-like superfamily. FabH family. Homodimer.

Its subcellular location is the cytoplasm. It catalyses the reaction anthraniloyl-CoA + malonyl-CoA + H(+) = (2-aminobenzoyl)acetyl-CoA + CO2 + CoA. Required for the biosynthesis of a number of signaling molecules, such as the quinolone signal 2-heptyl-3-hydroxy-4(1H)-quinolone (PQS), 2-heptyl-4-hydroxyquinoline (HHQ) and 2,4-dihydroxyquinoline (DHQ). These molecules are required for normal biofilm formation. Catalyzes the transfer of the anthraniloyl moiety from anthraniloyl-CoA to malonyl-CoA to form 2-aminobenzoylacetyl-CoA. The first step of the reaction is the formation of a covalent anthraniloyl-PqsD intermediate. Next, the short-lived intermediate 3-(2-aminophenyl)-3-oxopropanoyl-CoA is formed. An intramolecular rearrangement of this intermediate can give rise to 2,4-dihydroxyquinoline (DHQ). The polypeptide is Anthraniloyl-CoA anthraniloyltransferase (pqsD) (Pseudomonas aeruginosa (strain ATCC 15692 / DSM 22644 / CIP 104116 / JCM 14847 / LMG 12228 / 1C / PRS 101 / PAO1)).